Reading from the N-terminus, the 305-residue chain is MDVSGEPTVCSNAYANEMKLSDSKDIYVLAHPVTKKTRKRPRGLPLGVKLDPPTFKLNNMSHHYDTETFTPVSSQLDSVEVFSKFNISPEWYDLLSDELKEPYAKGIFLEYNRLLNSGEEILPSTGDIFAWTRFCGPQSIRVVIIGQDPYPTAGHAHGLAFSVKRGITPPSSLKNIFAALMESYPNMTPPTHGCLESWARQGVLLLNTTLTVRRGTPGSHVYLGWGRLVQRVLQRLCENRTGLVFMLWGAHAQKTTQPNSRCHLVLTHAHPSPLSRVPFRNCRHFVQANEYFTRKGEPEIDWSVI.

D148 (proton acceptor) is an active-site residue.

This sequence belongs to the uracil-DNA glycosylase (UDG) superfamily. UNG family.

The protein localises to the host nucleus. It catalyses the reaction Hydrolyzes single-stranded DNA or mismatched double-stranded DNA and polynucleotides, releasing free uracil.. Excises uracil residues from the DNA which can arise as a result of misincorporation of dUMP residues by DNA polymerase or deamination of cytosines. Therefore may reduce deleterious uracil incorporation into the viral genome, particularly in terminally differentiated cells which lack DNA repair enzymes. The polypeptide is Uracil-DNA glycosylase (Varicella-zoster virus (strain Dumas) (HHV-3)).